Reading from the N-terminus, the 154-residue chain is 3-hydroxyacyl-[acyl-carrier-protein] dehydratase FabZ (154 aa).

The active site involves His57.

It belongs to the thioester dehydratase family. FabZ subfamily.

The protein localises to the cytoplasm. The catalysed reaction is a (3R)-hydroxyacyl-[ACP] = a (2E)-enoyl-[ACP] + H2O. Its function is as follows. Involved in unsaturated fatty acids biosynthesis. Catalyzes the dehydration of short chain beta-hydroxyacyl-ACPs and long chain saturated and unsaturated beta-hydroxyacyl-ACPs. This is 3-hydroxyacyl-[acyl-carrier-protein] dehydratase FabZ from Sinorhizobium medicae (strain WSM419) (Ensifer medicae).